The following is a 93-amino-acid chain: Small ribosomal subunit protein uS19 (93 aa).

It belongs to the universal ribosomal protein uS19 family.

Protein S19 forms a complex with S13 that binds strongly to the 16S ribosomal RNA. This chain is Small ribosomal subunit protein uS19, found in Paenarthrobacter aurescens (strain TC1).